Reading from the N-terminus, the 456-residue chain is Bacteriochlorophyllide d C-12(1)-methyltransferase (456 aa).

The Radical SAM core domain occupies 178 to 405; sequence HAKKYSQLIP…MFEPKKLGGE (228 aa). Positions 194, 198, and 201 each coordinate [4Fe-4S] cluster.

The protein belongs to the radical SAM superfamily. [4Fe-4S] cluster is required as a cofactor.

The protein localises to the cytoplasm. The catalysed reaction is 8-ethyl-12-methyl-3-vinylbacteriochlorophyllide d + S-adenosyl-L-methionine = 8,12-diethyl-3-vinylbacteriochlorophyllide d + S-adenosyl-L-homocysteine + H(+). It participates in porphyrin-containing compound metabolism; bacteriochlorophyll biosynthesis (light-independent). Involved in the biosynthesis of the major light-harvesting pigment bacteriochlorophyll c (BChlc), which confers a significant competitive advantage to green sulfur bacteria living at limiting red and near-infrared light intensities. BchR is a methyltransferase that adds a single methyl group to the methyl carbon at the C-12(1) position of 8-ethyl-12-methyl-3-vinylbacteriochlorophyllide d to yield 8,12-diethyl-3-vinylbacteriochlorophyllide d. This chain is Bacteriochlorophyllide d C-12(1)-methyltransferase, found in Chlorobaculum tepidum (strain ATCC 49652 / DSM 12025 / NBRC 103806 / TLS) (Chlorobium tepidum).